The chain runs to 247 residues: ATP synthase subunit a, chloroplastic (247 aa).

5 helical membrane passes run 38–58, 95–115, 134–154, 199–219, and 220–240; these read QVLI…VIAV, VPFI…GALL, INTT…AGLS, LVVV…VMFL, and GLFT…AYIG.

It belongs to the ATPase A chain family. As to quaternary structure, F-type ATPases have 2 components, CF(1) - the catalytic core - and CF(0) - the membrane proton channel. CF(1) has five subunits: alpha(3), beta(3), gamma(1), delta(1), epsilon(1). CF(0) has four main subunits: a, b, b' and c.

It is found in the plastid. The protein resides in the chloroplast thylakoid membrane. In terms of biological role, key component of the proton channel; it plays a direct role in the translocation of protons across the membrane. In Hordeum vulgare (Barley), this protein is ATP synthase subunit a, chloroplastic.